Reading from the N-terminus, the 296-residue chain is (3R)-3-[(carboxymethyl)amino]fatty acid oxygenase/decarboxylase (296 aa).

(3R)-3-[(carboxymethyl)amino]butanoate is bound by residues Tyr-66, Tyr-71, and Gly-98. 3 residues coordinate (3R)-3-{[carboxy(hydroxy)methyl]amino}butanoate: Tyr-66, Tyr-71, and Gly-98. The Fe(2+) site is built by His-102 and Asp-104. (3R)-3-[(carboxymethyl)amino]butanoate is bound by residues Tyr-105 and Lys-163. 2 residues coordinate (3R)-3-{[carboxy(hydroxy)methyl]amino}butanoate: Tyr-105 and Lys-163. Position 265 (His-265) interacts with Fe(2+). His-269 contacts 2-oxoglutarate. Arg-280 is a binding site for (3R)-3-[(carboxymethyl)amino]butanoate. Arg-280 contacts (3R)-3-{[carboxy(hydroxy)methyl]amino}butanoate.

Belongs to the TfdA dioxygenase family. The cofactor is Fe(2+).

The enzyme catalyses a (3R)-3-[(carboxymethyl)amino]fatty acid + 2 2-oxoglutarate + 2 O2 = a (3R)-3-isocyanyl-fatty acid + 2 succinate + 3 CO2 + 2 H2O. It carries out the reaction a (3R)-3-[(carboxymethyl)amino]fatty acid + 2-oxoglutarate + O2 = a (3R)-3-{[carboxy(hydroxy)methyl]amino}fatty acid + succinate + CO2. It catalyses the reaction a (3R)-3-{[carboxy(hydroxy)methyl]amino}fatty acid + 2-oxoglutarate + O2 = a (3R)-3-isocyanyl-fatty acid + succinate + 2 CO2 + 2 H2O. The catalysed reaction is (3R)-3-[(carboxymethyl)amino]butanoate + 2 2-oxoglutarate + 2 O2 = (3R)-3-isocyanylbutanoate + 2 succinate + 3 CO2 + 2 H2O. The enzyme catalyses (3R)-3-[(carboxymethyl)amino]butanoate + 2-oxoglutarate + O2 = (3R)-3-{[carboxy(hydroxy)methyl]amino}butanoate + succinate + CO2. It carries out the reaction (3R)-3-{[carboxy(hydroxy)methyl]amino}butanoate + 2-oxoglutarate + O2 = (3R)-3-isocyanylbutanoate + succinate + 2 CO2 + 2 H2O. Involved in the biosynthesis of a unique class of isonitrile lipopeptides (INLPs). Catalyzes the conversion of (3R)-3-[(carboxymethyl)amino]fatty acids such as (3R)-3-[(carboxymethyl)amino]butanoate (CABA) to (3R)-3-isocyanylbutanoate (INBA) through an oxidative decarboxylation mechanism, thereby generating the isonitrile group of INLPs. This is (3R)-3-[(carboxymethyl)amino]fatty acid oxygenase/decarboxylase from Streptomyces coeruleorubidus.